Consider the following 306-residue polypeptide: Putative beta-lactamase HcpD (306 aa).

The signal sequence occupies residues 1–25 (MIKSWTKKWFLILFLMASCSSYLVA). 4 TPR repeats span residues 28 to 61 (GEKY…RVGV), 96 to 133 (HLAC…KGGV), 168 to 205 (GISC…KDGA), and 240 to 277 (GSGC…GFSG). 7 cysteine pairs are disulfide-bonded: Cys55–Cys63, Cys91–Cys99, Cys127–Cys135, Cys163–Cys171, Cys199–Cys207, Cys235–Cys243, and Cys271–Cys279.

This sequence belongs to the hcp beta-lactamase family.

It localises to the secreted. It catalyses the reaction a beta-lactam + H2O = a substituted beta-amino acid. Its function is as follows. May hydrolyze 6-aminopenicillinic acid and 7-aminocephalosporanic acid (ACA) derivatives. Binds to penicillin. This chain is Putative beta-lactamase HcpD (hcpD), found in Helicobacter pylori (strain ATCC 700392 / 26695) (Campylobacter pylori).